The following is a 145-amino-acid chain: 3-dehydroquinate dehydratase (145 aa).

Tyr-22 serves as the catalytic Proton acceptor. Positions 71, 77, and 84 each coordinate substrate. His-97 functions as the Proton donor in the catalytic mechanism. Substrate contacts are provided by residues 98-99 (IS) and Arg-108.

The protein belongs to the type-II 3-dehydroquinase family. Homododecamer.

The enzyme catalyses 3-dehydroquinate = 3-dehydroshikimate + H2O. It participates in metabolic intermediate biosynthesis; chorismate biosynthesis; chorismate from D-erythrose 4-phosphate and phosphoenolpyruvate: step 3/7. In terms of biological role, catalyzes a trans-dehydration via an enolate intermediate. This is 3-dehydroquinate dehydratase from Thermotoga neapolitana (strain ATCC 49049 / DSM 4359 / NBRC 107923 / NS-E).